We begin with the raw amino-acid sequence, 481 residues long: Glutamine synthetase (481 aa).

The GS beta-grasp domain maps to 22–106 (NEVEFVDFRF…VFCDVYDVYK (85 aa)). The 368-residue stretch at 114 to 481 (PRSIAKKALK…PFEFITTYSC (368 aa)) folds into the GS catalytic domain. Mg(2+) contacts are provided by Glu139, Glu141, Glu223, and Glu230. L-glutamate contacts are provided by residues 274-275 (NG) and Gly275. His279 is a binding site for Mg(2+). ATP-binding positions include 281 to 283 (HVS) and Ser283. Residues Arg331, Glu337, and Arg349 each coordinate L-glutamate. 2 residues coordinate ATP: Arg349 and Arg354. Glu367 is a Mg(2+) binding site. L-glutamate is bound at residue Arg369.

This sequence belongs to the glutamine synthetase family. As to quaternary structure, oligomer of 12 subunits arranged in the form of two hexameric ring. Mg(2+) is required as a cofactor.

The protein localises to the cytoplasm. It catalyses the reaction L-glutamate + NH4(+) + ATP = L-glutamine + ADP + phosphate + H(+). With respect to regulation, the activity of this enzyme could be controlled by adenylation under conditions of abundant glutamine. Its function is as follows. Catalyzes the ATP-dependent biosynthesis of glutamine from glutamate and ammonia. The polypeptide is Glutamine synthetase (Helicobacter pylori (strain J99 / ATCC 700824) (Campylobacter pylori J99)).